Here is a 337-residue protein sequence, read N- to C-terminus: Probable uridine nucleosidase 2 (337 aa).

His-260 is a catalytic residue.

This sequence belongs to the IUNH family.

The protein resides in the cytoplasm. It catalyses the reaction uridine + H2O = D-ribose + uracil. Functionally, involved in pyrimidine breakdown. The chain is Probable uridine nucleosidase 2 (URH2) from Oryza sativa subsp. japonica (Rice).